Here is a 448-residue protein sequence, read N- to C-terminus: MNINAAPQIIGHGSQGVTPGYMSGFGNSFETEALPGALPIGRNSPQRAAYGLYAEQLSGSPFTAPRGANERSWLYRIRPSVKHSGRFTKADMGLWRSAPCLEYDMPIAQLRWDAPSMPQEDLTFLQGVRTMTTAGDVNTQAGMATHMYLITQSMVDQHFYNADGELMFVPQQGSLRLVTEFGVISIEPAEIAVIPRGVKFRVELVDGPARGYLCENYGGAFTLPERGPIGANCLANSRDFLTPVAAYEDRDVPTELFVKWGGALWQTTLPHSPIDVVAWHGNYAPYKYDLRTFSPVGAIGFDHPDPSIFTVLTSPSETAGTANIDFVIFPERWMVAENTFRPPWYHMNIMSEFMGLICGVYDAKPQGFVPGGASLHNMMLPHGPDREAFDHASNGELKPVKLTGTMAFMFETRYPQRVTEYAATAGTLQDDYADCWRGLEKRFDPSRP.

Histidine 303 functions as the Proton acceptor in the catalytic mechanism. Fe cation is bound by residues histidine 346 and glutamate 352. Residues tyrosine 361 and histidine 382 each coordinate homogentisate. Position 382 (histidine 382) interacts with Fe cation.

This sequence belongs to the homogentisate dioxygenase family. Hexamer; dimer of trimers. The cofactor is Fe cation.

The catalysed reaction is homogentisate + O2 = 4-maleylacetoacetate + H(+). The protein operates within amino-acid degradation; L-phenylalanine degradation; acetoacetate and fumarate from L-phenylalanine: step 4/6. Involved in the catabolism of homogentisate (2,5-dihydroxyphenylacetate or 2,5-OH-PhAc), a central intermediate in the degradation of phenylalanine and tyrosine. Catalyzes the oxidative ring cleavage of the aromatic ring of homogentisate to yield maleylacetoacetate. This chain is Homogentisate 1,2-dioxygenase, found in Rhodopseudomonas palustris (strain HaA2).